Consider the following 317-residue polypeptide: Exopolysaccharide production protein ExoZ (317 aa).

7 helical membrane passes run 14–34, 53–73, 100–120, 132–152, 185–205, 206–226, and 268–288; these read TIGA…MWVI, IVPV…AGLF, IWPV…YAVF, LPVV…VAFD, LAVG…IGVL, GLPF…IGVL, and IGLG…LIGI.

Belongs to the acyltransferase 3 family.

The protein localises to the cell membrane. In terms of biological role, required for the acetyl modification of the third sugar (glucose) of the octasaccharide subunit of succinoglycan (EPS I). This chain is Exopolysaccharide production protein ExoZ (exoZ), found in Rhizobium meliloti (strain 1021) (Ensifer meliloti).